Consider the following 238-residue polypeptide: Zinc-finger homeodomain protein 11 (238 aa).

The ZF-HD dimerization-type; degenerate zinc finger occupies Tyr-12–Asp-59. Positions Arg-119–Gly-188 form a DNA-binding region, homeobox. Residues Gly-183–Ala-200 show a composition bias toward gly residues. Positions Gly-183–Met-238 are disordered.

As to quaternary structure, homo- and heterodimer with other ZFHD proteins.

Its subcellular location is the nucleus. Its function is as follows. Putative transcription factor. The polypeptide is Zinc-finger homeodomain protein 11 (ZHD11) (Oryza sativa subsp. indica (Rice)).